The sequence spans 214 residues: Adenylate kinase (214 aa).

10 to 15 (GAGKGT) lines the ATP pocket. Residues 30 to 59 (STGDMLRAAIKEGTPLGLEAKKVMDAGQLI) form an NMP region. Residues Thr-31, Arg-36, 57–59 (QLI), 85–88 (GFPR), and Gln-92 each bind AMP. The LID stretch occupies residues 122–159 (GRRVHPGSGRVYHVVYNPPKVADKDNETGEELIIRADD). Residues Arg-123 and 132-133 (VY) contribute to the ATP site. AMP-binding residues include Arg-156 and Arg-167. Residue Gln-200 coordinates ATP.

It belongs to the adenylate kinase family. As to quaternary structure, monomer.

The protein resides in the cytoplasm. The enzyme catalyses AMP + ATP = 2 ADP. It functions in the pathway purine metabolism; AMP biosynthesis via salvage pathway; AMP from ADP: step 1/1. Its function is as follows. Catalyzes the reversible transfer of the terminal phosphate group between ATP and AMP. Plays an important role in cellular energy homeostasis and in adenine nucleotide metabolism. The protein is Adenylate kinase of Pseudoalteromonas translucida (strain TAC 125).